A 129-amino-acid chain; its full sequence is Small ribosomal subunit protein uS11 (129 aa).

The protein belongs to the universal ribosomal protein uS11 family. In terms of assembly, part of the 30S ribosomal subunit. Interacts with proteins S7 and S18. Binds to IF-3.

Its function is as follows. Located on the platform of the 30S subunit, it bridges several disparate RNA helices of the 16S rRNA. Forms part of the Shine-Dalgarno cleft in the 70S ribosome. This Hahella chejuensis (strain KCTC 2396) protein is Small ribosomal subunit protein uS11.